The chain runs to 309 residues: tRNA pseudouridine synthase B (309 aa).

The Nucleophile role is filled by aspartate 39.

It belongs to the pseudouridine synthase TruB family. Type 1 subfamily.

The catalysed reaction is uridine(55) in tRNA = pseudouridine(55) in tRNA. In terms of biological role, responsible for synthesis of pseudouridine from uracil-55 in the psi GC loop of transfer RNAs. The protein is tRNA pseudouridine synthase B of Bacillus subtilis (strain 168).